The following is a 434-amino-acid chain: Cobyrinate a,c-diamide synthase (434 aa).

Residues 239 to 430 enclose the GATase cobBQ-type domain; sequence KMAIAYDPAF…SHLHFSNFQL (192 aa). Cysteine 320 (nucleophile) is an active-site residue.

The protein belongs to the CobB/CbiA family. It depends on Mg(2+) as a cofactor.

The enzyme catalyses cob(II)yrinate + 2 L-glutamine + 2 ATP + 2 H2O = cob(II)yrinate a,c diamide + 2 L-glutamate + 2 ADP + 2 phosphate + 2 H(+). The protein operates within cofactor biosynthesis; adenosylcobalamin biosynthesis; cob(II)yrinate a,c-diamide from sirohydrochlorin (anaerobic route): step 10/10. In terms of biological role, catalyzes the ATP-dependent amidation of the two carboxylate groups at positions a and c of cobyrinate, using either L-glutamine or ammonia as the nitrogen source. This is Cobyrinate a,c-diamide synthase from Saccharolobus solfataricus (strain ATCC 35092 / DSM 1617 / JCM 11322 / P2) (Sulfolobus solfataricus).